Consider the following 201-residue polypeptide: Mediator of RNA polymerase II transcription subunit 19 (201 aa).

The interval 166–201 is disordered; the sequence is GTGKSNAKKRKNRSNGSSMATPNSEMQDDVKRRRLE.

The protein belongs to the Mediator complex subunit 19 family. As to quaternary structure, component of the Mediator complex.

The protein resides in the nucleus. In terms of biological role, component of the Mediator complex, a coactivator involved in the regulated transcription of nearly all RNA polymerase II-dependent genes. Mediator functions as a bridge to convey information from gene-specific regulatory proteins to the basal RNA polymerase II transcription machinery. Mediator is recruited to promoters by direct interactions with regulatory proteins and serves as a scaffold for the assembly of a functional preinitiation complex with RNA polymerase II and the general transcription factors. The polypeptide is Mediator of RNA polymerase II transcription subunit 19 (ROX3) (Candida glabrata (strain ATCC 2001 / BCRC 20586 / JCM 3761 / NBRC 0622 / NRRL Y-65 / CBS 138) (Yeast)).